A 760-amino-acid polypeptide reads, in one-letter code: MVLKAFFPTCCVSTDSGLLVGRWVPEQSSAVVLAVLHFPFIPIQVKQLLAQVRQASQVGVAVLGTWCHCRQEPEESLGRFLESLGAVFPHEPWLRLCRERGGTFWSCEATHRQAPTAPGAPGEDQVMLIFYDQRQVLLSQLHLPTVLPDRQAGATTASTGGLAAVFDTVARSEVLFRSDRFDEGPVRLSHWQSEGVEASILAELARRASGPICLLLASLLSLVSAVSACRVFKLWPLSFLGSKLSTCEQLRHRLEHLTLIFSTRKAENPAQLMRKANTVASVLLDVALGLMLLSWLHGRSRIGHLADALVPVADHVAEELQHLLQWLMGAPAGLKMNRALDQVLGRFFLYHIHLWISYIHLMSPFVEHILWHVGLSACLGLTVALSLLSDIIALLTFHIYCFYVYGARLYCLKIHGLSSLWRLFRGKKWNVLRQRVDSCSYDLDQLFIGTLLFTILLFLLPTTALYYLVFTLLRLLVVAVQGLIHLLVDLINSLPLYSLGLRLCRPYRLADKPTALQPRGAHLPPPQLWLPPQALLGRPVPQAVPWGAHLPLEAERGQAGLRELLARLAPPHGHSQPSALPGWHQLSWRMSCALWTLLCAPEHGRPCYHTLGLEVIGSEQMWGWPARLAALHHWHCLPWDPLPTCCGHHGGEHSNPRCPEHCPMPTLCTQVQRVRPPQQPQVEGWSPWGLPSGSALAVGVEGPCQDEPPSPRHPLAPSAEQHPASGGLKQSLTPVPSGPGPSLPEPHGVYLRMFPGEVAL.

The next 5 helical transmembrane spans lie at 278–298 (TVAS…WLHG), 349–371 (LYHI…HILW), 378–400 (CLGL…FHIY), 446–468 (LFIG…LYYL), and 475–497 (LLVV…LPLY). Residues 696 to 748 (LAVGVEGPCQDEPPSPRHPLAPSAEQHPASGGLKQSLTPVPSGPGPSLPEPHG) are disordered.

Belongs to the PIGQ family. In terms of assembly, component of the glycosylphosphatidylinositol-N-acetylglucosaminyltransferase (GPI-GnT) complex composed at least by PIGA, PIGC, PIGH, PIGP, PIGQ, PIGY and DPM2. Interacts with PIGA, PIGH and PIGC.

It localises to the membrane. It participates in glycolipid biosynthesis; glycosylphosphatidylinositol-anchor biosynthesis. In terms of biological role, part of the glycosylphosphatidylinositol-N-acetylglucosaminyltransferase (GPI-GnT) complex that catalyzes the transfer of N-acetylglucosamine from UDP-N-acetylglucosamine to phosphatidylinositol and participates in the first step of GPI biosynthesis. The protein is Phosphatidylinositol N-acetylglucosaminyltransferase subunit Q of Homo sapiens (Human).